We begin with the raw amino-acid sequence, 367 residues long: MDLSIPNPVADATHQAGGNPGGQPLEIDALIVGAGPVGLFQVFELGLLEIKAHIIDSLKVVGGQCVELYPDKPIYDIPAVPICTGQELTDNLLKQIEPFSPTFHLGQEVSVVERREDGRFFVETSLGTRFITKTIFIAAGVGSFQPRTLKVEGIDKFEGKQLFYRVKDPSRFHGRNLVVVGGGDSALDWTLDLVGKAESVVMIHRRDGFRAAPASVAKMRELCEQMEMQFMVGQIGGYEEKDGVLTEIKVTGADGVTRRMPVDDILVFFGLSPKLGPIAEWGLDLERKQIKVDTEKFETNIPGIFAVGDINTYPGKKKLILSGFHEAALAAFGAAPYIFPDKKIHMQYTTTSPKLHKVLGVETPVFD.

Residues Asp56, Gln64, Tyr69, Val109, Phe144, Asp309, and Thr350 each contribute to the FAD site.

The protein belongs to the ferredoxin--NADP reductase type 2 family. In terms of assembly, homodimer. It depends on FAD as a cofactor.

The catalysed reaction is 2 reduced [2Fe-2S]-[ferredoxin] + NADP(+) + H(+) = 2 oxidized [2Fe-2S]-[ferredoxin] + NADPH. The polypeptide is Ferredoxin--NADP reductase 2 (Cupriavidus metallidurans (strain ATCC 43123 / DSM 2839 / NBRC 102507 / CH34) (Ralstonia metallidurans)).